The chain runs to 400 residues: MKAAGIIVEYNPFHNGHLYHLQKTKEITGADVVVAVMSGNFIQRGEPAIVNKWARTKMALLNGVDVVFELPFAYACNSAEVFAYGAISILNSLGVNWVVFGSEAGDISLLKKIAMHLAFEEDEFKKYLKIYLKEGHSFPKARELALKRVSKEDIEFLPNNILGVEYIKWILRTNSKIEPLTIKRVGSLYNDPNLGSGSFCSATAIRQNINNLELIRDKMPPFSYQVLMEEIESGRGPVSLNDFFEFFLYRAIVYKDFLKEQFDVKEGLENRFYKHIFSSSSLEDLLSKVKTKRYTLTRLQRILIHCLVDSKVNQKTLLSTKPYIRVLGFNSRGKRYLNSIKEKVKYITKLDSYIMKNPEYNSLLELEIRASQIHALKYKEYHKYLQLEFKQHPIYIPSRE.

ATP is bound by residues 7-20 (IVEY…HLYH), Gly101, Asn159, and Arg184.

This sequence belongs to the TmcAL family.

It localises to the cytoplasm. The enzyme catalyses cytidine(34) in elongator tRNA(Met) + acetate + ATP = N(4)-acetylcytidine(34) in elongator tRNA(Met) + AMP + diphosphate. Functionally, catalyzes the formation of N(4)-acetylcytidine (ac(4)C) at the wobble position of elongator tRNA(Met), using acetate and ATP as substrates. First activates an acetate ion to form acetyladenylate (Ac-AMP) and then transfers the acetyl group to tRNA to form ac(4)C34. The protein is tRNA(Met) cytidine acetate ligase of Caldicellulosiruptor saccharolyticus (strain ATCC 43494 / DSM 8903 / Tp8T 6331).